The sequence spans 75 residues: Small ribosomal subunit protein bS16 (75 aa).

Belongs to the bacterial ribosomal protein bS16 family.

The protein is Small ribosomal subunit protein bS16 of Aliarcobacter butzleri (strain RM4018) (Arcobacter butzleri).